The chain runs to 62 residues: Defensin-like protein A (62 aa).

An N-terminal signal peptide occupies residues 1–26; that stretch reads MRCVVLFMVSCLLIVLLINHFEEVEA. A disulfide bond links Cys42 and Cys52.

It belongs to the DEFL family.

Its subcellular location is the secreted. Functionally, truncated and inactivated form of SCRA, a protein involved in male-mediated self-incompatibility when active. Most A.thaliana cultivars contain such an inactive form and thus, are self-fertiles. The sequence is that of Defensin-like protein A (SCRA) from Arabidopsis thaliana (Mouse-ear cress).